The primary structure comprises 404 residues: Probable tRNA sulfurtransferase (404 aa).

The 106-residue stretch at 60–165 (HEVAESLKEI…DEAAYISYED (106 aa)) folds into the THUMP domain. Residues 183–184 (ML), 208–209 (HF), arginine 265, glycine 287, and glutamine 296 contribute to the ATP site.

It belongs to the ThiI family.

The protein localises to the cytoplasm. The enzyme catalyses [ThiI sulfur-carrier protein]-S-sulfanyl-L-cysteine + a uridine in tRNA + 2 reduced [2Fe-2S]-[ferredoxin] + ATP + H(+) = [ThiI sulfur-carrier protein]-L-cysteine + a 4-thiouridine in tRNA + 2 oxidized [2Fe-2S]-[ferredoxin] + AMP + diphosphate. It carries out the reaction [ThiS sulfur-carrier protein]-C-terminal Gly-Gly-AMP + S-sulfanyl-L-cysteinyl-[cysteine desulfurase] + AH2 = [ThiS sulfur-carrier protein]-C-terminal-Gly-aminoethanethioate + L-cysteinyl-[cysteine desulfurase] + A + AMP + 2 H(+). Its pathway is cofactor biosynthesis; thiamine diphosphate biosynthesis. Its function is as follows. Catalyzes the ATP-dependent transfer of a sulfur to tRNA to produce 4-thiouridine in position 8 of tRNAs, which functions as a near-UV photosensor. Also catalyzes the transfer of sulfur to the sulfur carrier protein ThiS, forming ThiS-thiocarboxylate. This is a step in the synthesis of thiazole, in the thiamine biosynthesis pathway. The sulfur is donated as persulfide by IscS. The chain is Probable tRNA sulfurtransferase from Streptococcus agalactiae serotype V (strain ATCC BAA-611 / 2603 V/R).